The primary structure comprises 190 residues: Putative manganese efflux pump MntP (190 aa).

6 helical membrane-spanning segments follow: residues 3 to 23 (MSAT…ASIG), 41 to 61 (LIFG…GFFA), 62 to 82 (SQYI…ILGG), 105 to 127 (LALL…VGLA), 143 to 163 (ATMI…PILG), and 168 to 188 (VMGG…HLGY).

The protein belongs to the MntP (TC 9.B.29) family.

The protein resides in the cell inner membrane. In terms of biological role, probably functions as a manganese efflux pump. This chain is Putative manganese efflux pump MntP, found in Pectobacterium carotovorum subsp. carotovorum (strain PC1).